Here is a 904-residue protein sequence, read N- to C-terminus: Translation initiation factor IF-2 (904 aa).

3 disordered regions span residues 102–122 (TYVKSENEGGGRAAPMTPDEE), 134–252 (RQRN…MVAG), and 267–316 (HLSA…ERPT). Residues 134-177 (RQRNLEEQQRLAESDRVRDEAIQRKREEEQAAKDRAEAERKAAE) show a composition bias toward basic and acidic residues. The segment covering 178–230 (EAAAAASAPAPVADAPKPSAAAPAARLPSSPSSAPRAARPAGASPASRPAAPA) has biased composition (low complexity). The 170-residue stretch at 403-572 (SRPPVVTIMG…SLQAEVLELK (170 aa)) folds into the tr-type G domain. The G1 stretch occupies residues 412–419 (GHVDHGKT). GTP is bound at residue 412 to 419 (GHVDHGKT). Residues 437 to 441 (GITQH) form a G2 region. The segment at 458–461 (DTPG) is G3. GTP is bound by residues 458 to 462 (DTPGH) and 512 to 515 (NKID). Residues 512-515 (NKID) form a G4 region. The G5 stretch occupies residues 548–550 (SAK).

Belongs to the TRAFAC class translation factor GTPase superfamily. Classic translation factor GTPase family. IF-2 subfamily.

The protein resides in the cytoplasm. One of the essential components for the initiation of protein synthesis. Protects formylmethionyl-tRNA from spontaneous hydrolysis and promotes its binding to the 30S ribosomal subunits. Also involved in the hydrolysis of GTP during the formation of the 70S ribosomal complex. In Xanthomonas axonopodis pv. citri (strain 306), this protein is Translation initiation factor IF-2.